The chain runs to 245 residues: 8-amino-3,8-dideoxy-manno-octulosonate cytidylyltransferase (245 aa).

This sequence belongs to the KdsB family.

It localises to the cytoplasm. It carries out the reaction 8-amino-3,8-dideoxy-alpha-D-manno-octulosonate + CTP = CMP-8-amino-3,8-dideoxy-alpha-D-manno-oct-2-ulosonate + diphosphate. It functions in the pathway bacterial outer membrane biogenesis; lipopolysaccharide biosynthesis. Functionally, activates KDO8N (a required 8-carbon sugar) for incorporation into bacterial lipopolysaccharide in the Shewanella genus. This is 8-amino-3,8-dideoxy-manno-octulosonate cytidylyltransferase from Shewanella baltica (strain OS223).